Consider the following 74-residue polypeptide: Psi-conotoxin PrIIIE (74 aa).

An N-terminal signal peptide occupies residues 1–19; sequence MSKLGVLLTICLLLFPITA. The propeptide occupies 20-50; the sequence is LPVDGDQPADRPVERMQDNISSEQHPFFEKR. Cystine bridges form between Cys-54–Cys-66, Cys-55–Cys-71, and Cys-61–Cys-72. Position 72 is a cysteine amide (Cys-72).

This sequence belongs to the conotoxin M superfamily. As to expression, expressed by the venom duct.

It is found in the secreted. Functionally, psi-conotoxins act on postsynaptic membranes, and act as non-competitive antagonist of nicotinic acetylcholine receptors (nAChR). Reversibly inhibits both adult- and fetal-types nAChR. The inhibition potency against the adult- (alpha-1/beta-1/epsilon/delta) is higher than against the fetal-type (alpha-1/beta-1/gamma/delta). Induces flaccid paralysis in goldfish, but does not induce any remarkable behavior in mice and does not block action potential in directly stimulated frog muscle preparations. This Conus parius (Cone snail) protein is Psi-conotoxin PrIIIE.